The primary structure comprises 382 residues: Dual-specificity RNA methyltransferase RlmN (382 aa).

Residue E91 is the Proton acceptor of the active site. The 243-residue stretch at 97–339 (EEDRGTLCIS…TTIRKTRGDD (243 aa)) folds into the Radical SAM core domain. C104 and C344 form a disulfide bridge. Residues C111, C115, and C118 each contribute to the [4Fe-4S] cluster site. S-adenosyl-L-methionine contacts are provided by residues 165 to 166 (GE), S197, 219 to 221 (SLH), and N301. C344 (S-methylcysteine intermediate) is an active-site residue.

Belongs to the radical SAM superfamily. RlmN family. [4Fe-4S] cluster is required as a cofactor.

It localises to the cytoplasm. It catalyses the reaction adenosine(2503) in 23S rRNA + 2 reduced [2Fe-2S]-[ferredoxin] + 2 S-adenosyl-L-methionine = 2-methyladenosine(2503) in 23S rRNA + 5'-deoxyadenosine + L-methionine + 2 oxidized [2Fe-2S]-[ferredoxin] + S-adenosyl-L-homocysteine. It carries out the reaction adenosine(37) in tRNA + 2 reduced [2Fe-2S]-[ferredoxin] + 2 S-adenosyl-L-methionine = 2-methyladenosine(37) in tRNA + 5'-deoxyadenosine + L-methionine + 2 oxidized [2Fe-2S]-[ferredoxin] + S-adenosyl-L-homocysteine. Its function is as follows. Specifically methylates position 2 of adenine 2503 in 23S rRNA and position 2 of adenine 37 in tRNAs. m2A2503 modification seems to play a crucial role in the proofreading step occurring at the peptidyl transferase center and thus would serve to optimize ribosomal fidelity. This is Dual-specificity RNA methyltransferase RlmN from Albidiferax ferrireducens (strain ATCC BAA-621 / DSM 15236 / T118) (Rhodoferax ferrireducens).